The chain runs to 141 residues: MATMQISAKGLAPLRPRVSSRRVVKPVASGGGKTDITKVGLNSIEDPVVKQNLMGKSRFMNKKDWKDASGRKGKGYGVYRYEDKYGANVDGYSPIYTPDLWTESGDSYTLGTKGLIAWAGLVLVLLAVGVNLIISTSQLGA.

A chloroplast-targeting transit peptide spans 1–27; sequence MATMQISAKGLAPLRPRVSSRRVVKPV. Phosphothreonine occurs at positions 34 and 37. Serine 43 is modified (phosphoserine). A helical membrane pass occupies residues 114–134; it reads GLIAWAGLVLVLLAVGVNLII.

It belongs to the psbR family.

It is found in the plastid. It localises to the chloroplast thylakoid membrane. Functionally, associated with the oxygen-evolving complex of photosystem II (PSII). Is required for the stable binding of LHCSR3 to PSII-LHCII supercomplexes and is essential for efficient energy-dependent quenching and the integrity of the PSII-LHCII-LHCSR3 supercomplex under continuous high light. This Chlamydomonas reinhardtii (Chlamydomonas smithii) protein is Photosystem II protein PSBR, chloroplastic.